The following is a 336-amino-acid chain: MSELVLITGITGFVASHSAEALLSQGYRVRGTYRFQEKLDGLLKNRPEWEKKVEFVQVPDCRAPNAYVEAAKGVDYVIHAATEVHSNLEPPRKDPHELLHIAIQGCENALIAAAQEPKVKRFVYISSEAALKGPVNYFGDGHVFTEKDWNPKTLREAEESDDELLNYTVCKKLGERAMHAFVARNTPRFQAIALNPPLILGPVFHLQSVDNLNFSTWFFWQLIKGRYEVAPESKFFNYVDVRDLAEAQVKALTAKTDKDRFVISGGAFKNDDIVNVALKYFPQFKDKIAKPNGETSPCNYEVDASLSIKELGLTYRPAEETFKDATESLYKLAGLL.

The N-terminal stretch at 1-21 is a signal peptide; the sequence is MSELVLITGITGFVASHSAEA. Residue K38 coordinates NADP(+). Position 153 is a phosphothreonine (T153). Y167 is an NADP(+) binding site.

This sequence belongs to the NAD(P)-dependent epimerase/dehydratase family. Dihydroflavonol-4-reductase subfamily.

This is an uncharacterized protein from Schizosaccharomyces pombe (strain 972 / ATCC 24843) (Fission yeast).